Consider the following 251-residue polypeptide: Triosephosphate isomerase (251 aa).

Positions 10 and 12 each coordinate substrate. His96 functions as the Electrophile in the catalytic mechanism. The active-site Proton acceptor is the Glu168.

This sequence belongs to the triosephosphate isomerase family. In terms of assembly, homodimer.

The catalysed reaction is D-glyceraldehyde 3-phosphate = dihydroxyacetone phosphate. It participates in carbohydrate biosynthesis; gluconeogenesis. It functions in the pathway carbohydrate degradation; glycolysis; D-glyceraldehyde 3-phosphate from glycerone phosphate: step 1/1. This chain is Triosephosphate isomerase (tpiA), found in Aspergillus oryzae (strain ATCC 42149 / RIB 40) (Yellow koji mold).